Reading from the N-terminus, the 223-residue chain is Fibronectin type III domain-containing protein 10 (223 aa).

Residues methionine 1–alanine 19 form the signal peptide. The Extracellular portion of the chain corresponds to alanine 20–glutamate 179. Positions leucine 72–valine 168 constitute a Fibronectin type-III domain. 2 N-linked (GlcNAc...) asparagine glycosylation sites follow: asparagine 86 and asparagine 109. A helical transmembrane segment spans residues isoleucine 180 to leucine 200. Topologically, residues leucine 201–proline 223 are cytoplasmic.

The protein resides in the membrane. This Mus musculus (Mouse) protein is Fibronectin type III domain-containing protein 10 (Fndc10).